We begin with the raw amino-acid sequence, 271 residues long: Membrane protein insertase YidC 1 (271 aa).

The signal sequence occupies residues 1–20 (MKKKLKTFSLILLTGSLLVA). Cys21 carries the N-palmitoyl cysteine lipid modification. Residue Cys21 is the site of S-diacylglycerol cysteine attachment. 4 helical membrane passes run 45–65 (IQWL…TLII), 124–144 (YASV…FQAL), 163–183 (PDPY…STWL), and 201–221 (VMPF…VLYW).

This sequence belongs to the OXA1/ALB3/YidC family. Type 2 subfamily.

Its subcellular location is the cell membrane. In terms of biological role, required for the insertion and/or proper folding and/or complex formation of integral membrane proteins into the membrane. Involved in integration of membrane proteins that insert both dependently and independently of the Sec translocase complex, as well as at least some lipoproteins. This Streptococcus agalactiae serotype V (strain ATCC BAA-611 / 2603 V/R) protein is Membrane protein insertase YidC 1.